Reading from the N-terminus, the 780-residue chain is Catenin beta-1 (780 aa).

A disordered region spans residues Gly34–Asp56. ARM repeat units follow at residues Asn140–Lys179, Arg224–Leu263, Glu266–Tyr305, Ser350–Asp389, Gly399–Asn430, Tyr431–Ser472, Glu478–Leu518, Pro520–Glu561, Ile583–Gln622, and Lys624–Glu663. Residues Glu735–Gly744 are compositionally biased toward basic and acidic residues. The disordered stretch occupies residues Glu735–Ser770.

This sequence belongs to the beta-catenin family. As to quaternary structure, interacts with adnpa. Interacts with cdh1 during oogenesis and in the unfertilized egg. Interacts with ctnna1 and cdh2. In terms of processing, phosphorylation by gsk3b promotes ubiquitination and subsequent degradation by the proteasome. Ubiquitinated when phosphorylated by gsk3b, leading to its degradation. In terms of tissue distribution, expressed in the successional lamina, also expressed in both the epithelial and mesenchymal cells of the developing replacement tooth (at protein level). Expressed in the enamel organ as well as in the inner and outer dental epithelium during replacement tooth morphogenesis (at protein level). Expressed in the differentiated, polarized odontoblasts that line the dentine matrix as well as in the inner and outer dental epithelium during tooth cytodifferentiation (at protein level). Expressed in the reduced enamel organ, odontoblasts and weakly at the center of the dental papilla of the functional tooth as well as in the epithelial crypts surrounding the functional tooth (at protein level). Expressed in the liver (at protein level). Expressed at intercalated disks in the heart (at protein level). Expressed in the ovary.

It is found in the cytoplasm. It localises to the nucleus. The protein localises to the cell membrane. Its subcellular location is the cell junction. The protein resides in the adherens junction. Key downstream component of the canonical Wnt signaling pathway. In the absence of Wnt, forms a complex with axin1, axin2, apc, csnk1a1 and gsk3b that promotes phosphorylation on N-terminal Ser and Thr residues and ubiquitination of ctnnb1 and its subsequent degradation by the proteasome. In the presence of Wnt ligand, ctnnb1 is not ubiquitinated and accumulates in the nucleus, where it acts as a coactivator for transcription factors of the TCF/LEF family, leading to activate Wnt responsive genes. Plays a key role in dorsoventral patterning: in prospective ventral blastomeres, its down-regulation by axin1 and axin2 leads to inhibit the Wnt signaling pathway, while in prospective dorsal blastomeres, degradation of axin results in stabilization and nuclear translocation of ctnnb1. The polypeptide is Catenin beta-1 (Danio rerio (Zebrafish)).